Here is a 431-residue protein sequence, read N- to C-terminus: Glutamate-1-semialdehyde 2,1-aminomutase (431 aa).

K269 is modified (N6-(pyridoxal phosphate)lysine).

It belongs to the class-III pyridoxal-phosphate-dependent aminotransferase family. HemL subfamily. As to quaternary structure, homodimer. Pyridoxal 5'-phosphate is required as a cofactor.

Its subcellular location is the cytoplasm. It carries out the reaction (S)-4-amino-5-oxopentanoate = 5-aminolevulinate. It functions in the pathway porphyrin-containing compound metabolism; protoporphyrin-IX biosynthesis; 5-aminolevulinate from L-glutamyl-tRNA(Glu): step 2/2. The protein operates within porphyrin-containing compound metabolism; chlorophyll biosynthesis. The chain is Glutamate-1-semialdehyde 2,1-aminomutase from Chlorobium phaeovibrioides (strain DSM 265 / 1930) (Prosthecochloris vibrioformis (strain DSM 265)).